The primary structure comprises 213 residues: Sclerostin (213 aa).

The first 23 residues, 1-23 (MQLPLALCLVCLLVHTAFRVVEG), serve as a signal peptide directing secretion. The interval 41 to 71 (GEYPEPPPELENNKTMNRAENGGRPPHHPFE) is disordered. Asn-53 carries N-linked (GlcNAc...) asparagine glycosylation. Disulfide bonds link Cys-80–Cys-134, Cys-94–Cys-148, Cys-105–Cys-165, and Cys-109–Cys-167. In terms of domain architecture, CTCK spans 82–172 (ELHFTRYVTD…ASCKCKRLTR (91 aa)). N-linked (GlcNAc...) asparagine glycosylation is present at Asn-175. The disordered stretch occupies residues 178 to 213 (ELKDFGTEAARPQKGRKPRPRARSAKANQAELENAY). Positions 190–201 (QKGRKPRPRARS) are enriched in basic residues.

The protein belongs to the sclerostin family. Interacts with LRP4 (via the extracellular domain); the interaction facilitates the inhibition of Wnt signaling. Interacts with LRP5 (via the first two YWTD-EGF repeat domains); the interaction inhibits Wnt-mediated signaling. Interacts with LRP6. In terms of tissue distribution, widely expressed at low levels with highest levels in bone, cartilage, kidney, liver, bone marrow and primary osteoblasts differentiated for 21 days. Detected in the subendothelial layer of the aortic intima (at protein level).

It is found in the secreted. Its subcellular location is the extracellular space. The protein resides in the extracellular matrix. In terms of biological role, negative regulator of bone growth that acts through inhibition of Wnt signaling and bone formation. This Homo sapiens (Human) protein is Sclerostin.